Consider the following 629-residue polypeptide: Serine/threonine-protein kinase ICK (629 aa).

Residues 4–284 (YTTIKQLGDG…ASQALRYPYF (281 aa)) form the Protein kinase domain. ATP-binding positions include 10-18 (LGDGTYGSV) and lysine 33. Aspartate 125 serves as the catalytic Proton acceptor. Residue threonine 157 is modified to Phosphothreonine; by CDK7. Tyrosine 159 is subject to Phosphotyrosine. The residue at position 161 (serine 161) is a Phosphoserine. 3 disordered regions span residues 292–376 (IISK…SLHN), 455–483 (SESV…SSAK), and 581–629 (SSLK…PSRR). A compositionally biased stretch (basic and acidic residues) spans 296–306 (DSGKPQREVQD). Positions 309-321 (GPPPYIKPAPPAQ) are enriched in pro residues. Low complexity-rich tracts occupy residues 322–344 (APAK…PQHS) and 457–470 (SVGT…QASS).

It belongs to the protein kinase superfamily. CMGC Ser/Thr protein kinase family. CDC2/CDKX subfamily. The cofactor is Mg(2+). Post-translationally, autophosphorylated on serine and threonine residues. Phosphorylation at Thr-157 by CDK7/Cak1p increases kinase activity. Highly expressed in colon and lung, lower levels present in heart, esophagus, stomach, small intestine and ovary. Localizes to the crypt region of large and small intestine.

Its subcellular location is the cytoplasm. It localises to the cytosol. The protein resides in the cell projection. It is found in the cilium. The protein localises to the nucleus. Its subcellular location is the cytoskeleton. It localises to the cilium basal body. The enzyme catalyses L-seryl-[protein] + ATP = O-phospho-L-seryl-[protein] + ADP + H(+). The catalysed reaction is L-threonyl-[protein] + ATP = O-phospho-L-threonyl-[protein] + ADP + H(+). Has an essential role in ciliogenesis, particularly in neuronal and retinal progenitor cells. Phosphorylates KIF3A. Involved in the control of ciliary length. Regulates the ciliary localization of SHH pathway components as well as the localization of IFT components at ciliary tips. May play a role in cardiac development. Regulates intraflagellar transport (IFT) speed and negatively regulates cilium length in a cAMP and mTORC1 signaling -dependent manner and this regulation requires its kinase activity. This Mus musculus (Mouse) protein is Serine/threonine-protein kinase ICK (Cilk1).